The following is an 85-amino-acid chain: Large ribosomal subunit protein bL27 (85 aa).

Residues 1–21 (MAHKKGLGSTKNGRDSQAKRL) are disordered.

Belongs to the bacterial ribosomal protein bL27 family.

In Thermus thermophilus (strain ATCC BAA-163 / DSM 7039 / HB27), this protein is Large ribosomal subunit protein bL27.